We begin with the raw amino-acid sequence, 566 residues long: Malate synthase, glyoxysomal (566 aa).

The active-site Proton acceptor is R182. The active-site Proton donor is D467. The Microbody targeting signal motif lies at 564–566 (SRL).

Belongs to the malate synthase family.

The protein localises to the glyoxysome. It catalyses the reaction glyoxylate + acetyl-CoA + H2O = (S)-malate + CoA + H(+). It functions in the pathway carbohydrate metabolism; glyoxylate cycle; (S)-malate from isocitrate: step 2/2. This chain is Malate synthase, glyoxysomal, found in Cucurbita maxima (Pumpkin).